The chain runs to 448 residues: Exodeoxyribonuclease 7 large subunit (448 aa).

The protein belongs to the XseA family. Heterooligomer composed of large and small subunits.

Its subcellular location is the cytoplasm. The catalysed reaction is Exonucleolytic cleavage in either 5'- to 3'- or 3'- to 5'-direction to yield nucleoside 5'-phosphates.. Its function is as follows. Bidirectionally degrades single-stranded DNA into large acid-insoluble oligonucleotides, which are then degraded further into small acid-soluble oligonucleotides. In Shewanella sp. (strain MR-7), this protein is Exodeoxyribonuclease 7 large subunit.